The chain runs to 80 residues: Sec-independent protein translocase protein TatA (80 aa).

The chain crosses the membrane as a helical span at residues 1–21; the sequence is MGQIGIWQILIIALVILVLFG. Residues 38–80 are disordered; sequence SFKKGLNEEDKPAEPAAKIEGPSHEAKPAGEAAKDPRPADKQG. Residues 58 to 80 show a composition bias toward basic and acidic residues; the sequence is GPSHEAKPAGEAAKDPRPADKQG.

This sequence belongs to the TatA/E family. The Tat system comprises two distinct complexes: a TatABC complex, containing multiple copies of TatA, TatB and TatC subunits, and a separate TatA complex, containing only TatA subunits. Substrates initially bind to the TatABC complex, which probably triggers association of the separate TatA complex to form the active translocon.

It is found in the cell inner membrane. Part of the twin-arginine translocation (Tat) system that transports large folded proteins containing a characteristic twin-arginine motif in their signal peptide across membranes. TatA could form the protein-conducting channel of the Tat system. The polypeptide is Sec-independent protein translocase protein TatA (Erythrobacter litoralis (strain HTCC2594)).